Here is a 221-residue protein sequence, read N- to C-terminus: Germin-like protein 5-1 (221 aa).

Residues 1-25 (MARPSLPCAVVAVLLLALLPTPSTA) form the signal peptide. A disulfide bond links C35 and C50. A Cupin type-1 domain is found at 62-210 (KGLAAAGNTN…AFQVGTKEVE (149 aa)). The N-linked (GlcNAc...) asparagine glycan is linked to N71. Positions 110, 112, 117, and 156 each coordinate Mn(2+).

It belongs to the germin family. In terms of assembly, oligomer (believed to be a pentamer but probably hexamer).

Its subcellular location is the secreted. The protein resides in the extracellular space. The protein localises to the apoplast. Functionally, may play a role in plant defense. Probably has no oxalate oxidase activity even if the active site is conserved. This chain is Germin-like protein 5-1, found in Oryza sativa subsp. japonica (Rice).